The primary structure comprises 244 residues: Small ribosomal subunit protein uS3 (244 aa).

A KH type-2 domain is found at 39 to 107 (VREMLRKKLA…PAHINVTEVR (69 aa)). Positions 213–244 (VGQEKQDDSPRNDRNDRGDRGDRPSRPAREAR) are disordered. Over residues 216–244 (EKQDDSPRNDRNDRGDRGDRPSRPAREAR) the composition is skewed to basic and acidic residues.

Belongs to the universal ribosomal protein uS3 family. As to quaternary structure, part of the 30S ribosomal subunit. Forms a tight complex with proteins S10 and S14.

Binds the lower part of the 30S subunit head. Binds mRNA in the 70S ribosome, positioning it for translation. In Xanthomonas campestris pv. campestris (strain 8004), this protein is Small ribosomal subunit protein uS3.